The chain runs to 1060 residues: RNA-binding protein 27 (1060 aa).

Composition is skewed to basic and acidic residues over residues 91 to 102 and 124 to 143; these read LVQEKEEIKEEV and TRSE…DGKW. 2 disordered regions span residues 91–143 and 162–235; these read LVQE…DGKW and WRRG…GAQS. The segment covering 165–185 has biased composition (basic residues); the sequence is GRSKSRSKSRGLSRSRSRSRG. Basic and acidic residues predominate over residues 186-211; sequence RSKDRDPNRNVEHRERSKFKSERNDL. Residues 225–235 show a composition bias toward polar residues; that stretch reads SSEQYSSGAQS. The C3H1-type zinc-finger motif lies at 273–301; sequence LPPKRRCRDYDERGFCVLGDLCQFDHGND. Composition is skewed to pro residues over residues 319 to 356 and 371 to 384; these read PPPG…PGPG and QPPP…PRPP. A disordered region spans residues 319–412; it reads PPPGLPPPPP…PNLASVGTRL (94 aa). Polar residues predominate over residues 386-402; that stretch reads TQSSLINSRDQPGTSAV. Thr447 is modified (phosphothreonine). Omega-N-methylarginine is present on Arg455. A disordered region spans residues 565-592; sequence MSGLEGPLTKKPWLGKQGNNNQNKPGFL. Residues 579 to 588 are compositionally biased toward low complexity; sequence GKQGNNNQNK. The region spanning 600–674 is the RRM domain; that stretch reads TKLEVKKIPQ…RFIRVLWHRE (75 aa). Residues 809–886 adopt a coiled-coil conformation; it reads VQEVLKKKQE…KDELKTSSAV (78 aa). A Phosphoserine modification is found at Ser927. Disordered regions lie at residues 940-968 and 1006-1060; these read PVGR…SLNH and DRRL…SWRR. 2 positions are modified to phosphoserine: Ser1012 and Ser1020. The span at 1024-1053 shows a compositional bias: acidic residues; the sequence is ETEEEEVKEEETETSDLFLPDDDDEDEDEY.

The protein resides in the cytoplasm. It localises to the nucleus speckle. Functionally, may be involved in the turnover of nuclear polyadenylated (pA+) RNA. In Homo sapiens (Human), this protein is RNA-binding protein 27.